A 394-amino-acid polypeptide reads, in one-letter code: Actin-related protein 2-A (394 aa).

ATP-binding positions include 160–162, 214–218, and 305–310; these read GDG, RMIKE, and GGSTMY.

Belongs to the actin family. ARP2 subfamily. Component of the Arp2/3 complex composed of actr2/arp2, actr3/arp3, arpc1 (arpc1a or arpc1b), arpc2, arpc3, arpc4 and arpc5.

It localises to the cytoplasm. The protein resides in the cytoskeleton. It is found in the cell projection. The protein localises to the nucleus. Functionally, ATP-binding component of the Arp2/3 complex, a multiprotein complex that mediates actin polymerization upon stimulation by nucleation-promoting factor (NPF). The Arp2/3 complex mediates the formation of branched actin networks in the cytoplasm, providing the force for cell motility. Seems to contact the pointed end of the daughter actin filament. In addition to its role in the cytoplasmic cytoskeleton, the Arp2/3 complex also promotes actin polymerization in the nucleus, thereby regulating gene transcription and repair of damaged DNA. The Arp2/3 complex promotes homologous recombination (HR) repair in response to DNA damage by promoting nuclear actin polymerization, leading to drive motility of double-strand breaks (DSBs). This chain is Actin-related protein 2-A (actr2-a), found in Xenopus laevis (African clawed frog).